Consider the following 328-residue polypeptide: GMP reductase (328 aa).

Cys176 acts as the Thioimidate intermediate in catalysis. 205 to 228 provides a ligand contact to NADP(+); that stretch reads IIADGGIRTHGDIAKSIRFGASMI.

The protein belongs to the IMPDH/GMPR family. GuaC type 2 subfamily.

It carries out the reaction IMP + NH4(+) + NADP(+) = GMP + NADPH + 2 H(+). Functionally, catalyzes the irreversible NADPH-dependent deamination of GMP to IMP. It functions in the conversion of nucleobase, nucleoside and nucleotide derivatives of G to A nucleotides, and in maintaining the intracellular balance of A and G nucleotides. The protein is GMP reductase of Streptococcus pneumoniae (strain P1031).